A 305-amino-acid chain; its full sequence is tRNA pseudouridine synthase B (305 aa).

Aspartate 39 functions as the Nucleophile in the catalytic mechanism.

The protein belongs to the pseudouridine synthase TruB family. Type 1 subfamily.

The enzyme catalyses uridine(55) in tRNA = pseudouridine(55) in tRNA. In terms of biological role, responsible for synthesis of pseudouridine from uracil-55 in the psi GC loop of transfer RNAs. The polypeptide is tRNA pseudouridine synthase B (Staphylococcus aureus (strain MSSA476)).